Consider the following 90-residue polypeptide: Auxin-responsive protein SAUR22 (90 aa).

Belongs to the ARG7 family.

It is found in the cell membrane. Functions as a positive effector of cell expansion through modulation of auxin transport. The chain is Auxin-responsive protein SAUR22 from Arabidopsis thaliana (Mouse-ear cress).